Reading from the N-terminus, the 373-residue chain is Dual-specificity RNA methyltransferase RlmN (373 aa).

The active-site Proton acceptor is the glutamate 94. The 240-residue stretch at 100 to 339 (EEDRATLCVS…VIVRKTRGDD (240 aa)) folds into the Radical SAM core domain. A disulfide bridge links cysteine 107 with cysteine 344. [4Fe-4S] cluster-binding residues include cysteine 114, cysteine 118, and cysteine 121. Residues 168 to 169 (GE), serine 200, 222 to 224 (SIH), and asparagine 301 each bind S-adenosyl-L-methionine. Cysteine 344 (S-methylcysteine intermediate) is an active-site residue.

Belongs to the radical SAM superfamily. RlmN family. [4Fe-4S] cluster serves as cofactor.

The protein localises to the cytoplasm. The catalysed reaction is adenosine(2503) in 23S rRNA + 2 reduced [2Fe-2S]-[ferredoxin] + 2 S-adenosyl-L-methionine = 2-methyladenosine(2503) in 23S rRNA + 5'-deoxyadenosine + L-methionine + 2 oxidized [2Fe-2S]-[ferredoxin] + S-adenosyl-L-homocysteine. It carries out the reaction adenosine(37) in tRNA + 2 reduced [2Fe-2S]-[ferredoxin] + 2 S-adenosyl-L-methionine = 2-methyladenosine(37) in tRNA + 5'-deoxyadenosine + L-methionine + 2 oxidized [2Fe-2S]-[ferredoxin] + S-adenosyl-L-homocysteine. In terms of biological role, specifically methylates position 2 of adenine 2503 in 23S rRNA and position 2 of adenine 37 in tRNAs. m2A2503 modification seems to play a crucial role in the proofreading step occurring at the peptidyl transferase center and thus would serve to optimize ribosomal fidelity. The sequence is that of Dual-specificity RNA methyltransferase RlmN from Shewanella sediminis (strain HAW-EB3).